The sequence spans 885 residues: Alanine--tRNA ligase (885 aa).

Residues histidine 564, histidine 568, cysteine 676, and histidine 680 each contribute to the Zn(2+) site.

It belongs to the class-II aminoacyl-tRNA synthetase family. Requires Zn(2+) as cofactor.

The protein resides in the cytoplasm. It carries out the reaction tRNA(Ala) + L-alanine + ATP = L-alanyl-tRNA(Ala) + AMP + diphosphate. Catalyzes the attachment of alanine to tRNA(Ala) in a two-step reaction: alanine is first activated by ATP to form Ala-AMP and then transferred to the acceptor end of tRNA(Ala). Also edits incorrectly charged Ser-tRNA(Ala) and Gly-tRNA(Ala) via its editing domain. The protein is Alanine--tRNA ligase of Brucella abortus (strain 2308).